Consider the following 291-residue polypeptide: Ribosomal RNA small subunit methyltransferase A (291 aa).

S-adenosyl-L-methionine-binding residues include H37, L39, G64, E85, D110, and N131.

This sequence belongs to the class I-like SAM-binding methyltransferase superfamily. rRNA adenine N(6)-methyltransferase family. RsmA subfamily.

It localises to the cytoplasm. It carries out the reaction adenosine(1518)/adenosine(1519) in 16S rRNA + 4 S-adenosyl-L-methionine = N(6)-dimethyladenosine(1518)/N(6)-dimethyladenosine(1519) in 16S rRNA + 4 S-adenosyl-L-homocysteine + 4 H(+). Functionally, specifically dimethylates two adjacent adenosines (A1518 and A1519) in the loop of a conserved hairpin near the 3'-end of 16S rRNA in the 30S particle. May play a critical role in biogenesis of 30S subunits. This is Ribosomal RNA small subunit methyltransferase A from Dehalococcoides mccartyi (strain CBDB1).